We begin with the raw amino-acid sequence, 159 residues long: Phosphopantetheine adenylyltransferase (159 aa).

T10 serves as a coordination point for substrate. ATP-binding positions include 10 to 11 (TF) and H18. Positions 42, 74, and 88 each coordinate substrate. ATP-binding positions include 89 to 91 (GLR), E99, and 124 to 130 (NSFISST).

Belongs to the bacterial CoaD family. Homohexamer. Requires Mg(2+) as cofactor.

Its subcellular location is the cytoplasm. It carries out the reaction (R)-4'-phosphopantetheine + ATP + H(+) = 3'-dephospho-CoA + diphosphate. It participates in cofactor biosynthesis; coenzyme A biosynthesis; CoA from (R)-pantothenate: step 4/5. Its function is as follows. Reversibly transfers an adenylyl group from ATP to 4'-phosphopantetheine, yielding dephospho-CoA (dPCoA) and pyrophosphate. The protein is Phosphopantetheine adenylyltransferase of Shewanella halifaxensis (strain HAW-EB4).